We begin with the raw amino-acid sequence, 513 residues long: GMP synthase [glutamine-hydrolyzing] (513 aa).

A Glutamine amidotransferase type-1 domain is found at 9–198; sequence LILVLDFGSQ…IREICKCTGE (190 aa). C86 acts as the Nucleophile in catalysis. Residues H172 and E174 contribute to the active site. Residues 199-388 form the GMPS ATP-PPase domain; the sequence is WTMENFIEIE…LGIPEHLVWR (190 aa). 226-232 is a binding site for ATP; the sequence is SGGVDSS.

Homodimer.

The catalysed reaction is XMP + L-glutamine + ATP + H2O = GMP + L-glutamate + AMP + diphosphate + 2 H(+). The protein operates within purine metabolism; GMP biosynthesis; GMP from XMP (L-Gln route): step 1/1. Functionally, catalyzes the synthesis of GMP from XMP. This Macrococcus caseolyticus (strain JCSC5402) (Macrococcoides caseolyticum) protein is GMP synthase [glutamine-hydrolyzing].